The chain runs to 227 residues: 2-C-methyl-D-erythritol 4-phosphate cytidylyltransferase (227 aa).

It belongs to the IspD/TarI cytidylyltransferase family. IspD subfamily.

It carries out the reaction 2-C-methyl-D-erythritol 4-phosphate + CTP + H(+) = 4-CDP-2-C-methyl-D-erythritol + diphosphate. The protein operates within isoprenoid biosynthesis; isopentenyl diphosphate biosynthesis via DXP pathway; isopentenyl diphosphate from 1-deoxy-D-xylulose 5-phosphate: step 2/6. Its function is as follows. Catalyzes the formation of 4-diphosphocytidyl-2-C-methyl-D-erythritol from CTP and 2-C-methyl-D-erythritol 4-phosphate (MEP). This is 2-C-methyl-D-erythritol 4-phosphate cytidylyltransferase from Dehalococcoides mccartyi (strain ATCC BAA-2266 / KCTC 15142 / 195) (Dehalococcoides ethenogenes (strain 195)).